We begin with the raw amino-acid sequence, 255 residues long: Sorbose reductase sou1 (255 aa).

Residues I21 and N95 each contribute to the NADP(+) site. Active-site proton donor residues include S148 and Y163. The NADP(+) site is built by Y163, K167, I195, and T197. Catalysis depends on K167, which acts as the Lowers pKa of active site Tyr.

This sequence belongs to the short-chain dehydrogenases/reductases (SDR) family.

It catalyses the reaction D-sorbitol + NADP(+) = keto-L-sorbose + NADPH + H(+). Functionally, catalyzes the NADP dependent reduction of L-sorbose to D-glucitol. This is Sorbose reductase sou1 (sou1) from Schizosaccharomyces pombe (strain 972 / ATCC 24843) (Fission yeast).